We begin with the raw amino-acid sequence, 825 residues long: MDESALTLGTIDVSYLPNSSEYSIGRCKHATEEWGECGSRPTVFRSATLKWKESLMSRKRPFVGRCCYSCTPQSWDKFFNPSIPSLGLRNVIYINETHTRHRGWLARRLSYVLFIQERDVHKGMFATNVTENVLNSSRVQEAIAEVAGELNPDGSAQQQSKAVNKVKKKARKILQEMVATVSPAMIRLTGWVLLKLFNSFFWNIQIHKGQLEMVKAATETNLPLIFLPVHRSHIDYLLLTFILFCHNIKAPYIASGNNLNIPIFSTLIHKLGGFFIRRRLDETPDGRKDILYRALLHGHIVELLRQQQFLEIFLEGTRSRSGKISCARAGLLSVVVDTLSTNTIPDILIIPGGISYDRIIEGHYNGEQLGKPKKNESLWSIARGVIRMLRKNYGCVKTDFAQPFSLKEYLESQSQKPVSAPLSLEQALLPAILPSRPSGAADEGTDMSINESRNATDESRRRLIAHLAEHILFTASKSCAIMSTHIVACLLLYRHRQGIGLFTLVEDFFVMKEEVLARDFDLGFSGNSEDVVMHAIQFLGNCITITHTSKNDEFFITPSTTIPSVFELNFYSNGVLHVFIMEAIIACSLYAVLKKRGPGGPASPSLVSQEQLVHKAASLCYLLSNEGTISLPCQTFYQICHETVGRFIQYGILIVAEQDDQEDISPGLAEQQWDKKLPEPLSWRSDEEDEDSDFGEEQRDCYLKVSQSKEHQQFITFLQRLLGPLLEAYSSAAVFIHNFGGPVPEPEFLQKLHKYLITRTERRVAVYAESATYCLVKNAVKTFKDIGVFKETKQKRVSGLELSNTFLPQCNRQKLLEYILSLVVL.

At M1–G87 the chain is on the cytoplasmic side. The tract at residues N80–V120 is important for mitochondrial localization. An intramembrane segment occupies L88 to R118. The Cytoplasmic segment spans residues D119–L825. The HXXXXD motif signature appears at H230 to D235. 5 residues coordinate CoA: R278, R279, K288, R293, and R328. The residue at position 380 (S380) is a Phosphoserine. Residues S435 to A455 are disordered. CoA is bound at residue R461. 2 positions are modified to phosphoserine: S685 and S692. 2 positions are modified to N6-acetyllysine: K777 and K781.

This sequence belongs to the GPAT/DAPAT family. Highly expressed in adipose tissues and lung. Low expression in liver.

The protein resides in the mitochondrion outer membrane. It carries out the reaction sn-glycerol 3-phosphate + an acyl-CoA = a 1-acyl-sn-glycero-3-phosphate + CoA. It catalyses the reaction (9Z,12Z)-octadecadienoyl-CoA + sn-glycerol 3-phosphate = 1-(9Z,12Z)-octadecadienoyl-sn-glycero-3-phosphate + CoA. The catalysed reaction is sn-glycerol 3-phosphate + (9Z)-octadecenoyl-CoA = 1-(9Z-octadecenoyl)-sn-glycero-3-phosphate + CoA. The enzyme catalyses sn-glycerol 3-phosphate + octadecanoyl-CoA = 1-octadecanoyl-sn-glycero-3-phosphate + CoA. It carries out the reaction sn-glycerol 3-phosphate + hexadecanoyl-CoA = 1-hexadecanoyl-sn-glycero-3-phosphate + CoA. It catalyses the reaction dodecanoyl-CoA + sn-glycerol 3-phosphate = 1-dodecanoyl-sn-glycerol 3-phosphate + CoA. The catalysed reaction is 1-acyl-sn-glycero-3-phospho-(1'-sn-glycerol) + an acyl-CoA = a 1,2-diacyl-sn-glycero-3-phospho-(1'-sn-glycerol) + CoA. The protein operates within phospholipid metabolism; CDP-diacylglycerol biosynthesis; CDP-diacylglycerol from sn-glycerol 3-phosphate: step 1/3. Mitochondrial membrane protein that catalyzes the essential first step of biosynthesis of glycerolipids such as triglycerides, phosphatidic acids and lysophosphatidic acids. Esterifies acyl-group from acyl-coenzyme A (acyl-CoA) to the sn-1 position of glycerol-3-phosphate, to produce lysophosphatidic acid. Has a narrow hydrophobic binding cleft that selects for a linear acyl chain. Catalytic activity is higher for substrates with a 16-carbon acyl chain. The sequence is that of Glycerol-3-phosphate acyltransferase 1, mitochondrial from Bos taurus (Bovine).